The chain runs to 226 residues: Triosephosphate isomerase (226 aa).

13–15 (NFK) is a substrate binding site. H97 serves as the catalytic Electrophile. The active-site Proton acceptor is E145. Substrate contacts are provided by residues I150, G185, and 206-207 (AS).

The protein belongs to the triosephosphate isomerase family. As to quaternary structure, homotetramer; dimer of dimers.

It localises to the cytoplasm. It carries out the reaction D-glyceraldehyde 3-phosphate = dihydroxyacetone phosphate. Its pathway is carbohydrate biosynthesis; gluconeogenesis. The protein operates within carbohydrate degradation; glycolysis; D-glyceraldehyde 3-phosphate from glycerone phosphate: step 1/1. Functionally, involved in the gluconeogenesis. Catalyzes stereospecifically the conversion of dihydroxyacetone phosphate (DHAP) to D-glyceraldehyde-3-phosphate (G3P). This chain is Triosephosphate isomerase, found in Methanobacterium bryantii.